The chain runs to 192 residues: Peptidyl-tRNA hydrolase (192 aa).

TRNA is bound at residue Tyr-17. His-22 acts as the Proton acceptor in catalysis. TRNA contacts are provided by Tyr-68, Asn-70, and Asn-116.

Belongs to the PTH family. Monomer.

It localises to the cytoplasm. It carries out the reaction an N-acyl-L-alpha-aminoacyl-tRNA + H2O = an N-acyl-L-amino acid + a tRNA + H(+). Functionally, hydrolyzes ribosome-free peptidyl-tRNAs (with 1 or more amino acids incorporated), which drop off the ribosome during protein synthesis, or as a result of ribosome stalling. In terms of biological role, catalyzes the release of premature peptidyl moieties from peptidyl-tRNA molecules trapped in stalled 50S ribosomal subunits, and thus maintains levels of free tRNAs and 50S ribosomes. This chain is Peptidyl-tRNA hydrolase, found in Mycolicibacterium vanbaalenii (strain DSM 7251 / JCM 13017 / BCRC 16820 / KCTC 9966 / NRRL B-24157 / PYR-1) (Mycobacterium vanbaalenii).